The following is a 366-amino-acid chain: DNA integrity scanning protein DisA (366 aa).

The 139-residue stretch at valine 21–proline 159 folds into the DAC domain. ATP-binding positions include glycine 88, leucine 106, and threonine 119–serine 123.

Belongs to the DisA family. Homooctamer. Mg(2+) serves as cofactor.

The enzyme catalyses 2 ATP = 3',3'-c-di-AMP + 2 diphosphate. Participates in a DNA-damage check-point. DisA forms globular foci that rapidly scan along the chromosomes searching for lesions. Functionally, also has diadenylate cyclase activity, catalyzing the condensation of 2 ATP molecules into cyclic di-AMP (c-di-AMP). c-di-AMP likely acts as a signaling molecule that may couple DNA integrity with a cellular process. The sequence is that of DNA integrity scanning protein DisA from Corynebacterium glutamicum (strain ATCC 13032 / DSM 20300 / JCM 1318 / BCRC 11384 / CCUG 27702 / LMG 3730 / NBRC 12168 / NCIMB 10025 / NRRL B-2784 / 534).